Reading from the N-terminus, the 471-residue chain is MRFLFLMITLTALTGYILADEQPTFRWAVVHDPSIIKVGNMYYVFGTHLQVAKSKDLMHWEQINTSAHDKNPIIPNINEELKETLSWARTRNDIWAPQVIQLSDGRYYMYYCASTFGSPRSAIGIAVSDDIEGPYKHYAVIVKSGQVYSVDGPSEDGTPYDSRKHPNALDPGVFYDKEGNLWMVYGSWFGGIYILKLDPNTGLPLPGQGYGKRLVGGNHSSMEGPYILYSPDTDYYYLFLSFGGLDYRGGYNIRVARSKNPNGPYYDPEGKSMENCMGSKTVISNYGAKLVGNFILSESNTIDFKAFGYVSPGHNSAYYDPETGKYFIFFHTRFPGRGETYQLRVHQLFLNEDGWFVMAPFPYGGETVSKLPNEEIVGEYQFINHGKEITDKIKQPVRIKLNSDGSITGAVEGRWERKEHYITLKIIEGNTTVIYKGVLLKQWHYSEKKWVTVFTALSNQGVSVWGIRVEE.

Residues 1–19 (MRFLFLMITLTALTGYILA) form the signal peptide. D32 acts as the Proton acceptor in catalysis. Residues D32, G117, 167-170 (NALD), 187-189 (SWF), and 219-223 (HSSME) contribute to the substrate site. E223 serves as the catalytic Proton donor. H314 contributes to the Ca(2+) binding site.

Belongs to the glycosyl hydrolase 43 family. Monomer. It depends on Ca(2+) as a cofactor.

It localises to the secreted. It carries out the reaction Endohydrolysis of (1-&gt;5)-alpha-arabinofuranosidic linkages in (1-&gt;5)-arabinans.. The protein operates within glycan metabolism; L-arabinan degradation. Involved in the degradation of arabinan and is a key enzyme in the complete degradation of the plant cell wall. Catalyzes the internal cleavage of alpha-(1-&gt;5)-L-arabinofuranosyl residues in different arabinan-containing polysaccharides, and releases arabinotriose and arabinobiose as end products. It acts on branched arabinan (from sugar beet), but more slowly when compared to linear or debranched arabinan. The sequence is that of Extracellular endo-alpha-(1-&gt;5)-L-arabinanase from Thermotoga petrophila (strain ATCC BAA-488 / DSM 13995 / JCM 10881 / RKU-1).